We begin with the raw amino-acid sequence, 131 residues long: Small ribosomal subunit protein uS8 (131 aa).

The protein belongs to the universal ribosomal protein uS8 family. As to quaternary structure, part of the 30S ribosomal subunit. Contacts proteins S5 and S12.

In terms of biological role, one of the primary rRNA binding proteins, it binds directly to 16S rRNA central domain where it helps coordinate assembly of the platform of the 30S subunit. In Hyphomonas neptunium (strain ATCC 15444), this protein is Small ribosomal subunit protein uS8.